A 284-amino-acid chain; its full sequence is Nucleotide-binding protein Pput_0988 (284 aa).

8–15 is an ATP binding site; that stretch reads GRSGSGKS. Residue 60–63 participates in GTP binding; sequence DARN.

The protein belongs to the RapZ-like family.

In terms of biological role, displays ATPase and GTPase activities. The chain is Nucleotide-binding protein Pput_0988 from Pseudomonas putida (strain ATCC 700007 / DSM 6899 / JCM 31910 / BCRC 17059 / LMG 24140 / F1).